A 432-amino-acid polypeptide reads, in one-letter code: Tol-Pal system protein TolB (432 aa).

Residues 1-29 form the signal peptide; it reads MMRNVWKSGLRRSAWIGLLMVLCVGVARA.

It belongs to the TolB family. As to quaternary structure, the Tol-Pal system is composed of five core proteins: the inner membrane proteins TolA, TolQ and TolR, the periplasmic protein TolB and the outer membrane protein Pal. They form a network linking the inner and outer membranes and the peptidoglycan layer.

Its subcellular location is the periplasm. In terms of biological role, part of the Tol-Pal system, which plays a role in outer membrane invagination during cell division and is important for maintaining outer membrane integrity. This Ralstonia nicotianae (strain ATCC BAA-1114 / GMI1000) (Ralstonia solanacearum) protein is Tol-Pal system protein TolB.